A 421-amino-acid polypeptide reads, in one-letter code: RNase J-like protein (421 aa).

Residues H55, H57, D59, H60, H132, D153, and H389 each coordinate Zn(2+).

It belongs to the metallo-beta-lactamase superfamily. RNA-metabolizing metallo-beta-lactamase-like family. As to quaternary structure, forms homodimers on heating to 60 degrees Celsius which may be the active form. It depends on Zn(2+) as a cofactor.

Its activity is regulated as follows. Inhibited by imidazole. In terms of biological role, a 5'-3' exoribonuclease with a strong reference for 5'-monophosphorylated RNA and no endoribonuclease activty. This Methanocaldococcus jannaschii (strain ATCC 43067 / DSM 2661 / JAL-1 / JCM 10045 / NBRC 100440) (Methanococcus jannaschii) protein is RNase J-like protein.